The following is a 393-amino-acid chain: Acetylornithine aminotransferase (393 aa).

Residues 95 to 96 (GA) and Phe127 contribute to the pyridoxal 5'-phosphate site. Arg130 lines the N(2)-acetyl-L-ornithine pocket. 214-217 (DEVQ) lines the pyridoxal 5'-phosphate pocket. An N6-(pyridoxal phosphate)lysine modification is found at Lys243. Ser271 is a N(2)-acetyl-L-ornithine binding site. Thr272 contributes to the pyridoxal 5'-phosphate binding site.

Belongs to the class-III pyridoxal-phosphate-dependent aminotransferase family. ArgD subfamily. Homodimer. The cofactor is pyridoxal 5'-phosphate.

The protein localises to the cytoplasm. It catalyses the reaction N(2)-acetyl-L-ornithine + 2-oxoglutarate = N-acetyl-L-glutamate 5-semialdehyde + L-glutamate. The protein operates within amino-acid biosynthesis; L-arginine biosynthesis; N(2)-acetyl-L-ornithine from L-glutamate: step 4/4. The protein is Acetylornithine aminotransferase of Nitrosomonas europaea (strain ATCC 19718 / CIP 103999 / KCTC 2705 / NBRC 14298).